A 5255-amino-acid chain; its full sequence is Bacitracin synthase 1 (5255 aa).

Positions 39-612 are domain 1 (isoleucine-activating); sequence LHELFEEQAM…IKELSAFIEA (574 aa). Residues 519-531 show a composition bias toward basic and acidic residues; the sequence is VDRKALPEPDRTA. The tract at residues 519 to 542 is disordered; sequence VDRKALPEPDRTAGAENEYEAPRN. The region spanning 539–614 is the Carrier 1 domain; it reads APRNETEEKL…ELSAFIEANH (76 aa). Serine 574 carries the post-translational modification O-(pantetheine 4'-phosphoryl)serine. Residues 621 to 1037 are cyclization; it reads TLVTRAADPE…ITWDYVEQIF (417 aa). The domain 2 (cysteine-activating) stretch occupies residues 1109–1648; sequence HHDEVMTYQE…FKNDTIIALD (540 aa). Carrier domains follow at residues 1580 to 1655, 2616 to 2691, 3659 to 3733, and 5166 to 5241; these read LPEN…KNRE, APRD…VRRR, PPRN…TEET, and APRN…LTAE. Serine 1615, serine 2651, serine 3694, and serine 5201 each carry O-(pantetheine 4'-phosphoryl)serine. Positions 2124–2689 are domain 3 (leucine-activating); the sequence is GKAIHQLFEE…IKGLRDISVR (566 aa). Residues 3164-3732 form a domain 4 (glutamine-activating) region; sequence DHPAVAFGDE…KDLSRFITEE (569 aa). Residues 4668-5249 are domain 5 (isoleucine-activating); sequence LHELFEEQAM…AEAESAVSEE (582 aa).

Belongs to the ATP-dependent AMP-binding enzyme family. In terms of assembly, large multienzyme complex of BA1, BA2 and BA3. Requires pantetheine 4'-phosphate as cofactor.

It catalyses the reaction L-glutamate = D-glutamate. It participates in antibiotic biosynthesis; bacitracin biosynthesis. Its function is as follows. Activates five amino acids, incorporates two D-amino acids, releases and cyclizes the mature bacitracin. The chain is Bacitracin synthase 1 (bacA) from Bacillus licheniformis.